We begin with the raw amino-acid sequence, 107 residues long: Pyrimidine/purine nucleoside phosphorylase (107 aa).

The protein belongs to the nucleoside phosphorylase PpnP family.

The catalysed reaction is a purine D-ribonucleoside + phosphate = a purine nucleobase + alpha-D-ribose 1-phosphate. It carries out the reaction adenosine + phosphate = alpha-D-ribose 1-phosphate + adenine. The enzyme catalyses cytidine + phosphate = cytosine + alpha-D-ribose 1-phosphate. It catalyses the reaction guanosine + phosphate = alpha-D-ribose 1-phosphate + guanine. The catalysed reaction is inosine + phosphate = alpha-D-ribose 1-phosphate + hypoxanthine. It carries out the reaction thymidine + phosphate = 2-deoxy-alpha-D-ribose 1-phosphate + thymine. The enzyme catalyses uridine + phosphate = alpha-D-ribose 1-phosphate + uracil. It catalyses the reaction xanthosine + phosphate = alpha-D-ribose 1-phosphate + xanthine. In terms of biological role, catalyzes the phosphorolysis of diverse nucleosides, yielding D-ribose 1-phosphate and the respective free bases. Can use uridine, adenosine, guanosine, cytidine, thymidine, inosine and xanthosine as substrates. Also catalyzes the reverse reactions. This is Pyrimidine/purine nucleoside phosphorylase from Azoarcus sp. (strain BH72).